The chain runs to 919 residues: DNA double-strand break repair Rad50 ATPase (919 aa).

Residues 33–39 (NGAGKST) and glutamine 143 each bind ATP. Coiled coils occupy residues 208–268 (MTLR…MLVN), 315–379 (HEVA…RRYT), and 414–458 (ESVL…LEES). Residues 417-516 (LERLDAVIND…EASRLQDKRR (100 aa)) enclose the Zinc-hook domain. Zn(2+)-binding residues include cysteine 464 and cysteine 467. 3 coiled-coil regions span residues 486–515 (EAER…QDKR), 541–595 (EDLA…LQRL), and 635–749 (AYRS…RKAS).

Belongs to the SMC family. RAD50 subfamily. Homodimer. Forms a heterotetramer composed of two Mre11 subunits and two Rad50 subunits. It depends on Zn(2+) as a cofactor.

Part of the Rad50/Mre11 complex, which is involved in the early steps of DNA double-strand break (DSB) repair. The complex may facilitate opening of the processed DNA ends to aid in the recruitment of HerA and NurA. Rad50 controls the balance between DNA end bridging and DNA resection via ATP-dependent structural rearrangements of the Rad50/Mre11 complex. This chain is DNA double-strand break repair Rad50 ATPase, found in Aeropyrum pernix (strain ATCC 700893 / DSM 11879 / JCM 9820 / NBRC 100138 / K1).